Here is a 484-residue protein sequence, read N- to C-terminus: MSAPLSIEQDDLLTDDLKSWLSDIDFSNDNEEAIEMEPSDIEMSSPPIDIETSPPEEADVNLDDTWATVQKNGNNKLNRFILTFFPSDMDTKWLEPETYFENSPNKFDCWTGQYEYCPDTGKLHAHIYIECNHKHRIRFNVFHREIRKYHQSVQLQLAKRASKKQRQSAINYVTADFKRAPGSLVFRWEHNKFPSDFDPKCVNKKSKSDKVSKDEQHETQRLWIESKPRHWTWDQIVHENEESKKLLFGCTAGEKYHKGRHAEDARRTINDVIIFYGAGGTGKTTEAQAWGSEDEPVQECRYYRRNPDDGAFWGGGRTCYKGQRIVHYEEFAGQEAFGRLKEVCDIGKHGPAVNVKNGGALLNHDTVIFTSNIHPAGWFHKLWESDPKQWMPFERRITQVRFYPSHRADGSLNQPDENNPPYFIDQTEEFRQFVGDYDKAKEHAELHWPLKEAPEPTAQVFVPGRSHGVTENTFFEYCKTGRAP.

The Nuclear localization signal motif lies at 146–153 (IRKYHQSV).

Its subcellular location is the host nucleus. Plays an essential for the replication of viral DNA. Presumably cleaves viral genomic dsRNA replicative form to initiate rolling circle replication. The chain is Replication-associated protein from Chaetoceros (Chaetoceros sp. DNA virus 7).